We begin with the raw amino-acid sequence, 64 residues long: Large ribosomal subunit protein uL29 (64 aa).

This sequence belongs to the universal ribosomal protein uL29 family.

This chain is Large ribosomal subunit protein uL29, found in Psychrobacter sp. (strain PRwf-1).